The chain runs to 382 residues: Chaperone protein DnaJ 1 (382 aa).

The 65-residue stretch at 4-68 (DYYGILGVDR…DKRRIVDMGG (65 aa)) folds into the J domain. Residues 134–216 (GAKKDLTLDT…CAGDGRVRAR (83 aa)) form a CR-type zinc finger. Residues Cys-147, Cys-150, Cys-164, Cys-167, Cys-190, Cys-193, Cys-204, and Cys-207 each contribute to the Zn(2+) site. CXXCXGXG motif repeat units lie at residues 147–154 (CTKCHGSG), 164–171 (CGTCNGAG), 190–197 (CHTCDGTG), and 204–211 (CTECAGDG).

The protein belongs to the DnaJ family. In terms of assembly, homodimer. Zn(2+) serves as cofactor.

The protein resides in the cytoplasm. Participates actively in the response to hyperosmotic and heat shock by preventing the aggregation of stress-denatured proteins and by disaggregating proteins, also in an autonomous, DnaK-independent fashion. Unfolded proteins bind initially to DnaJ; upon interaction with the DnaJ-bound protein, DnaK hydrolyzes its bound ATP, resulting in the formation of a stable complex. GrpE releases ADP from DnaK; ATP binding to DnaK triggers the release of the substrate protein, thus completing the reaction cycle. Several rounds of ATP-dependent interactions between DnaJ, DnaK and GrpE are required for fully efficient folding. Also involved, together with DnaK and GrpE, in the DNA replication of plasmids through activation of initiation proteins. This Corynebacterium glutamicum (strain ATCC 13032 / DSM 20300 / JCM 1318 / BCRC 11384 / CCUG 27702 / LMG 3730 / NBRC 12168 / NCIMB 10025 / NRRL B-2784 / 534) protein is Chaperone protein DnaJ 1.